The following is a 432-amino-acid chain: Glutamyl-tRNA reductase (432 aa).

Substrate-binding positions include 55-58 (TCNR), S114, 119-121 (ETQ), and Q125. C56 (nucleophile) is an active-site residue. Residue 194–199 (GAGEMI) coordinates NADP(+).

The protein belongs to the glutamyl-tRNA reductase family. Homodimer.

It carries out the reaction (S)-4-amino-5-oxopentanoate + tRNA(Glu) + NADP(+) = L-glutamyl-tRNA(Glu) + NADPH + H(+). It functions in the pathway porphyrin-containing compound metabolism; protoporphyrin-IX biosynthesis; 5-aminolevulinate from L-glutamyl-tRNA(Glu): step 1/2. Catalyzes the NADPH-dependent reduction of glutamyl-tRNA(Glu) to glutamate 1-semialdehyde (GSA). This chain is Glutamyl-tRNA reductase, found in Burkholderia multivorans (strain ATCC 17616 / 249).